A 335-amino-acid polypeptide reads, in one-letter code: MSQEKYGVLMVNLGTPEAPTPRAVKRYLAEFLSDKRVVDTPRALWLPLLYGAILPLRSPRVAKLYQSVWMDEGSPLLVYSRRQQQALAASLPDVAVELAMSYGQPALPQAIARLLAQDITRLVILPLYPQYSCSTSAAIWDAVARILTGYRRLPSISFIRDYAAHPAYIAALAASVERAFTRHGRPDRLIISFHGIPQRYAEEGDDYPQRCDVTLQALAAALDYPPEQVMMTFQSRFGRDPWLLPATDETMKSLPSAGVQHVQVICPGFAADCLETLEEIQVQNREIFEHAGGSTFHYIPALNDDAAHVDLLHQLVTAALRPSAPPPAVVSLASF.

Positions 194 and 275 each coordinate Fe cation.

It belongs to the ferrochelatase family.

The protein resides in the cytoplasm. It carries out the reaction heme b + 2 H(+) = protoporphyrin IX + Fe(2+). The protein operates within porphyrin-containing compound metabolism; protoheme biosynthesis; protoheme from protoporphyrin-IX: step 1/1. Its function is as follows. Catalyzes the ferrous insertion into protoporphyrin IX. The chain is Ferrochelatase from Sodalis glossinidius (strain morsitans).